The primary structure comprises 239 residues: Small ribosomal subunit protein uS2 (239 aa).

It belongs to the universal ribosomal protein uS2 family.

The polypeptide is Small ribosomal subunit protein uS2 (Francisella tularensis subsp. tularensis (strain WY96-3418)).